A 197-amino-acid chain; its full sequence is Imidazoleglycerol-phosphate dehydratase (197 aa).

The protein belongs to the imidazoleglycerol-phosphate dehydratase family.

The protein localises to the cytoplasm. It carries out the reaction D-erythro-1-(imidazol-4-yl)glycerol 3-phosphate = 3-(imidazol-4-yl)-2-oxopropyl phosphate + H2O. It participates in amino-acid biosynthesis; L-histidine biosynthesis; L-histidine from 5-phospho-alpha-D-ribose 1-diphosphate: step 6/9. The protein is Imidazoleglycerol-phosphate dehydratase of Bradyrhizobium sp. (strain BTAi1 / ATCC BAA-1182).